The sequence spans 147 residues: Epididymal secretory protein E3-beta (147 aa).

The N-terminal stretch at 1-25 (MASSLKIWGTLLALLCILCTLLVQS) is a signal peptide.

In terms of tissue distribution, epididymis.

The protein resides in the secreted. Functionally, possible function in sperm maturation. This chain is Epididymal secretory protein E3-beta (EDDM3B), found in Homo sapiens (Human).